Consider the following 285-residue polypeptide: MDKIKVGLQYWIPQHALTRLVGKLASARAGSLTTAIIRWFIKQYNVNMDEALHSDPTHFKTFNEFFVRELKAGVRPIAEGEKVITHPADACVSQFGAIEYGKLIQAKGHTYSAQELLGGDAKLAEEFRDGDFATLYLSPRDYHRVHMPCDGTLRQMIYVPGDLFSVNPLTAENVPNLFARNERVVCIFDTEFGPMAQVLVGATIVGSIELVWAGTVTPPRGNTVYRWDYPANGNQAVVLKKGEEMGRFKLGSTVINLFAKQAIRFDDSMALGAPTRMGEPYAHQA.

Catalysis depends on charge relay system; for autoendoproteolytic cleavage activity residues D89, H146, and S252. Residue S252 is the Schiff-base intermediate with substrate; via pyruvic acid; for decarboxylase activity of the active site. S252 carries the pyruvic acid (Ser); by autocatalysis modification.

It belongs to the phosphatidylserine decarboxylase family. PSD-B subfamily. Prokaryotic type I sub-subfamily. In terms of assembly, heterodimer of a large membrane-associated beta subunit and a small pyruvoyl-containing alpha subunit. The cofactor is pyruvate. Is synthesized initially as an inactive proenzyme. Formation of the active enzyme involves a self-maturation process in which the active site pyruvoyl group is generated from an internal serine residue via an autocatalytic post-translational modification. Two non-identical subunits are generated from the proenzyme in this reaction, and the pyruvate is formed at the N-terminus of the alpha chain, which is derived from the carboxyl end of the proenzyme. The autoendoproteolytic cleavage occurs by a canonical serine protease mechanism, in which the side chain hydroxyl group of the serine supplies its oxygen atom to form the C-terminus of the beta chain, while the remainder of the serine residue undergoes an oxidative deamination to produce ammonia and the pyruvoyl prosthetic group on the alpha chain. During this reaction, the Ser that is part of the protease active site of the proenzyme becomes the pyruvoyl prosthetic group, which constitutes an essential element of the active site of the mature decarboxylase.

It localises to the cell membrane. It catalyses the reaction a 1,2-diacyl-sn-glycero-3-phospho-L-serine + H(+) = a 1,2-diacyl-sn-glycero-3-phosphoethanolamine + CO2. It functions in the pathway phospholipid metabolism; phosphatidylethanolamine biosynthesis; phosphatidylethanolamine from CDP-diacylglycerol: step 2/2. Catalyzes the formation of phosphatidylethanolamine (PtdEtn) from phosphatidylserine (PtdSer). The chain is Phosphatidylserine decarboxylase proenzyme from Vibrio cholerae serotype O1 (strain ATCC 39541 / Classical Ogawa 395 / O395).